A 302-amino-acid polypeptide reads, in one-letter code: Aspartate carbamoyltransferase catalytic subunit (302 aa).

Positions 53 and 54 each coordinate carbamoyl phosphate. Lys82 contributes to the L-aspartate binding site. Carbamoyl phosphate-binding residues include Arg103, His131, and Gln134. Arg164 and Arg223 together coordinate L-aspartate. Carbamoyl phosphate-binding residues include Leu260 and Pro261.

This sequence belongs to the aspartate/ornithine carbamoyltransferase superfamily. ATCase family. Heterooligomer of catalytic and regulatory chains.

It carries out the reaction carbamoyl phosphate + L-aspartate = N-carbamoyl-L-aspartate + phosphate + H(+). The protein operates within pyrimidine metabolism; UMP biosynthesis via de novo pathway; (S)-dihydroorotate from bicarbonate: step 2/3. In terms of biological role, catalyzes the condensation of carbamoyl phosphate and aspartate to form carbamoyl aspartate and inorganic phosphate, the committed step in the de novo pyrimidine nucleotide biosynthesis pathway. The protein is Aspartate carbamoyltransferase catalytic subunit of Methanococcus maripaludis (strain C7 / ATCC BAA-1331).